Consider the following 136-residue polypeptide: MSFMKEFREFAMRGNVVDLAVGVIIGAAFGRIVSSLVADIIMPPLGLLLGGVDFKQFHFVLRAAEGNIPAVVMNYGSFIQSVFDFVIVALAIFSAVKLMNKLRREKAEEPAAPPAPTTEEKLLAEIRDLLKAQQQK.

The next 2 membrane-spanning stretches (helical) occupy residues 10-30 (FAMR…AAFG) and 76-96 (GSFI…FSAV).

This sequence belongs to the MscL family. As to quaternary structure, homopentamer.

The protein resides in the cell inner membrane. Channel that opens in response to stretch forces in the membrane lipid bilayer. May participate in the regulation of osmotic pressure changes within the cell. This Yersinia enterocolitica serotype O:8 / biotype 1B (strain NCTC 13174 / 8081) protein is Large-conductance mechanosensitive channel.